The sequence spans 212 residues: Phosphatidylserine decarboxylase proenzyme (212 aa).

The active-site Schiff-base intermediate with substrate; via pyruvic acid is Ser182. Residue Ser182 is modified to Pyruvic acid (Ser); by autocatalysis.

It belongs to the phosphatidylserine decarboxylase family. PSD-A subfamily. Heterodimer of a large membrane-associated beta subunit and a small pyruvoyl-containing alpha subunit. Requires pyruvate as cofactor. In terms of processing, is synthesized initially as an inactive proenzyme. Formation of the active enzyme involves a self-maturation process in which the active site pyruvoyl group is generated from an internal serine residue via an autocatalytic post-translational modification. Two non-identical subunits are generated from the proenzyme in this reaction, and the pyruvate is formed at the N-terminus of the alpha chain, which is derived from the carboxyl end of the proenzyme. The post-translation cleavage follows an unusual pathway, termed non-hydrolytic serinolysis, in which the side chain hydroxyl group of the serine supplies its oxygen atom to form the C-terminus of the beta chain, while the remainder of the serine residue undergoes an oxidative deamination to produce ammonia and the pyruvoyl prosthetic group on the alpha chain.

The protein localises to the cell membrane. It catalyses the reaction a 1,2-diacyl-sn-glycero-3-phospho-L-serine + H(+) = a 1,2-diacyl-sn-glycero-3-phosphoethanolamine + CO2. It participates in phospholipid metabolism; phosphatidylethanolamine biosynthesis; phosphatidylethanolamine from CDP-diacylglycerol: step 2/2. Functionally, catalyzes the formation of phosphatidylethanolamine (PtdEtn) from phosphatidylserine (PtdSer). In Chlorobium limicola (strain DSM 245 / NBRC 103803 / 6330), this protein is Phosphatidylserine decarboxylase proenzyme.